Consider the following 30-residue polypeptide: Varv peptide B (30 aa).

The segment at residues 1–30 (GLPVCGETCFGGTCNTPGCSCDPWPMCSRN) is a cross-link (cyclopeptide (Gly-Asn)). 3 disulfides stabilise this stretch: C5/C19, C9/C21, and C14/C27.

Post-translationally, this is a cyclic peptide.

Functionally, probably participates in a plant defense mechanism. This chain is Varv peptide B, found in Viola arvensis (European field pansy).